We begin with the raw amino-acid sequence, 888 residues long: Endochitinase A1 (888 aa).

The signal sequence occupies residues 1–22; the sequence is MVSSKLSFVATAVAALAPLASA. Residues 29 to 338 form the GH18 domain; sequence SNLAIYWGQG…DHMKDILLHC (310 aa). Glu174 serves as the catalytic Proton donor. 3 disordered regions span residues 338–631, 743–799, and 813–855; these read CDPS…TTTA, PVTE…VSTS, and PLIL…YTQE. A compositionally biased stretch (low complexity) spans 344 to 617; sequence VTSSSAIPSS…STDESSTTVG (274 aa). The N-linked (GlcNAc...) asparagine glycan is linked to Asn622. Polar residues predominate over residues 764-775; it reads EGSNPTQPSGAS. Residue Asn780 is glycosylated (N-linked (GlcNAc...) asparagine). Positions 835 to 855 are enriched in polar residues; it reads PSGQNSGSSSHVPIPPSYTQE. Gly863 carries GPI-anchor amidated glycine lipidation. Residues 864 to 888 constitute a propeptide, removed in mature form; the sequence is AASRVTGLGHGLVLTVLTLSAFFVL.

This sequence belongs to the glycosyl hydrolase 18 family. Chitinase class III subfamily.

It is found in the cell membrane. The protein localises to the secreted. Its subcellular location is the cell wall. The catalysed reaction is Random endo-hydrolysis of N-acetyl-beta-D-glucosaminide (1-&gt;4)-beta-linkages in chitin and chitodextrins.. Its activity is regulated as follows. The cyclic peptide natural product argifin acts as a specific inhibitor. GPI-anchored chitinase involved in the degradation of chitin, a component of the cell walls of fungi and exoskeletal elements of some animals (including worms and arthropods). Required to reshape the cell wall at the sites where cell wall remodeling and/or cell wall maturation actively take place such as sites of conidia formation. The chain is Endochitinase A1 (chiA1) from Aspergillus fumigatus (strain ATCC MYA-4609 / CBS 101355 / FGSC A1100 / Af293) (Neosartorya fumigata).